A 61-amino-acid polypeptide reads, in one-letter code: Large ribosomal subunit protein uL30 (61 aa).

This sequence belongs to the universal ribosomal protein uL30 family. In terms of assembly, part of the 50S ribosomal subunit.

This chain is Large ribosomal subunit protein uL30, found in Exiguobacterium sibiricum (strain DSM 17290 / CCUG 55495 / CIP 109462 / JCM 13490 / 255-15).